The chain runs to 151 residues: Large ribosomal subunit protein uL22 (151 aa).

Belongs to the universal ribosomal protein uL22 family. In terms of assembly, part of the 50S ribosomal subunit.

In terms of biological role, this protein binds specifically to 23S rRNA. It makes multiple contacts with different domains of the 23S rRNA in the assembled 50S subunit and ribosome. Its function is as follows. The globular domain of the protein is located near the polypeptide exit tunnel on the outside of the subunit, while an extended beta-hairpin is found that lines the wall of the exit tunnel in the center of the 70S ribosome. This is Large ribosomal subunit protein uL22 from Thermofilum pendens (strain DSM 2475 / Hrk 5).